The primary structure comprises 465 residues: Probable Xaa-Pro aminopeptidase pepP (465 aa).

Residues D261, D272, E395, and E435 each contribute to the Mn(2+) site.

The protein belongs to the peptidase M24B family. The cofactor is Mn(2+).

It carries out the reaction Release of any N-terminal amino acid, including proline, that is linked to proline, even from a dipeptide or tripeptide.. Functionally, catalyzes the removal of a penultimate prolyl residue from the N-termini of peptides. The chain is Probable Xaa-Pro aminopeptidase pepP (pepP) from Talaromyces marneffei (strain ATCC 18224 / CBS 334.59 / QM 7333) (Penicillium marneffei).